The primary structure comprises 557 residues: Polypyrimidine tract-binding protein 1 (557 aa).

An N-acetylmethionine modification is found at Met-1. Ser-16 bears the Phosphoserine mark. RRM domains lie at 59-143, 184-260, and 363-437; these read RVIH…SSPN, LRII…FSKL, and SVLL…LSKH. Lys-65 is covalently cross-linked (Glycyl lysine isopeptide (Lys-Gly) (interchain with G-Cter in SUMO2)). The residue at position 127 (Tyr-127) is a Phosphotyrosine. At Thr-138 the chain carries Phosphothreonine. Ser-141 carries the post-translational modification Phosphoserine. Lys-218 is covalently cross-linked (Glycyl lysine isopeptide (Lys-Gly) (interchain with G-Cter in SUMO2)). Ser-459 carries the phosphoserine modification. Positions 480 to 555 constitute an RRM 4 domain; that stretch reads ATLHLSNIPP…HHLRVSFSKS (76 aa).

As to quaternary structure, monomer. Part of a ternary complex containing KHSRP, PTBP1, PTBP2 and HNRPH1. Interacts with RAVER1 and SFPQ.

Its subcellular location is the nucleus. In terms of biological role, plays a role in pre-mRNA splicing and in the regulation of alternative splicing events. Activates exon skipping of its own pre-mRNA during muscle cell differentiation. Binds to the polypyrimidine tract of introns. May promote RNA looping when bound to two separate polypyrimidine tracts in the same pre-mRNA. May promote the binding of U2 snRNP to pre-mRNA. Cooperates with RAVER1 to modulate switching between mutually exclusive exons during maturation of the TPM1 pre-mRNA. Represses the splicing of MAPT/Tau exon 10. Binds to polypyrimidine-rich controlling element (PCE) of CFTR and promotes exon skipping of CFTR exon 9, thereby antagonizing TIA1 and its role in exon inclusion of CFTR exon 9. Plays a role in the splicing of pyruvate kinase PKM by binding repressively to a polypyrimidine tract flanking PKM exon 9, inhibiting exon 9 inclusion and resulting in exon 10 inclusion and production of the PKM M2 isoform. This is Polypyrimidine tract-binding protein 1 (PTBP1) from Sus scrofa (Pig).